The primary structure comprises 96 residues: UPF0213 protein BCE_0033 (96 aa).

Positions 4-79 constitute a GIY-YIG domain; sequence NKHCFYVVEC…KQLNRKQKEE (76 aa).

Belongs to the UPF0213 family.

This is UPF0213 protein BCE_0033 from Bacillus cereus (strain ATCC 10987 / NRS 248).